Reading from the N-terminus, the 160-residue chain is Transcription elongation factor GreA (160 aa).

Positions 49 to 75 form a coiled coil; sequence SEYDEAKNDQAFTEGKILQLENKLKNA.

This sequence belongs to the GreA/GreB family.

Necessary for efficient RNA polymerase transcription elongation past template-encoded arresting sites. The arresting sites in DNA have the property of trapping a certain fraction of elongating RNA polymerases that pass through, resulting in locked ternary complexes. Cleavage of the nascent transcript by cleavage factors such as GreA or GreB allows the resumption of elongation from the new 3'terminus. GreA releases sequences of 2 to 3 nucleotides. In Clostridium botulinum (strain Eklund 17B / Type B), this protein is Transcription elongation factor GreA.